A 240-amino-acid chain; its full sequence is MNDILFIIQARMGSTRLPGKVLRPLGSNRLLDILVHRVRQSAFYQKDRDNLVIATSDKETDDILEAHCIKQGFRVFRGSEERVLDRFVKVIEAVKPSVIIRLTGDNPFVDPELLDVMIQAHFDQGSDYTYILNAPLGICGEVVNANLLIDISRIQALEDQYQEHVTLYIRNHPALYRVQFLEAPERFRAPQYRLTIDTKEDYESIKALYQKAGERPDVSASELITLLNRNPDAATEREAD.

Belongs to the CMP-NeuNAc synthase family.

Its pathway is spore coat biogenesis; spore coat polysaccharide biosynthesis. In Bacillus subtilis (strain 168), this protein is Spore coat polysaccharide biosynthesis protein SpsF (spsF).